The sequence spans 553 residues: Dihydroxy-acid dehydratase 1 (553 aa).

Asp-78 lines the Mg(2+) pocket. [2Fe-2S] cluster is bound at residue Cys-119. Residues Asp-120 and Lys-121 each coordinate Mg(2+). Lys-121 is modified (N6-carboxylysine). [2Fe-2S] cluster is bound at residue Cys-191. Glu-444 lines the Mg(2+) pocket. The active-site Proton acceptor is Ser-470.

It belongs to the IlvD/Edd family. As to quaternary structure, homodimer. [2Fe-2S] cluster is required as a cofactor. The cofactor is Mg(2+).

It catalyses the reaction (2R)-2,3-dihydroxy-3-methylbutanoate = 3-methyl-2-oxobutanoate + H2O. The enzyme catalyses (2R,3R)-2,3-dihydroxy-3-methylpentanoate = (S)-3-methyl-2-oxopentanoate + H2O. Its pathway is amino-acid biosynthesis; L-isoleucine biosynthesis; L-isoleucine from 2-oxobutanoate: step 3/4. It participates in amino-acid biosynthesis; L-valine biosynthesis; L-valine from pyruvate: step 3/4. Its function is as follows. Functions in the biosynthesis of branched-chain amino acids. Catalyzes the dehydration of (2R,3R)-2,3-dihydroxy-3-methylpentanoate (2,3-dihydroxy-3-methylvalerate) into 2-oxo-3-methylpentanoate (2-oxo-3-methylvalerate) and of (2R)-2,3-dihydroxy-3-methylbutanoate (2,3-dihydroxyisovalerate) into 2-oxo-3-methylbutanoate (2-oxoisovalerate), the penultimate precursor to L-isoleucine and L-valine, respectively. The polypeptide is Dihydroxy-acid dehydratase 1 (Methanosarcina acetivorans (strain ATCC 35395 / DSM 2834 / JCM 12185 / C2A)).